A 757-amino-acid chain; its full sequence is Vitamin K-dependent gamma-carboxylase (757 aa).

An N-acetylalanine modification is found at Ala2. Over 2–60 (AVHRGSALVAPASDKVQKNKSAQTSGLKQGSRMEKILGFEWTDLSSWQSVVTLLNKPTD) the chain is Cytoplasmic. A helical membrane pass occupies residues 61 to 81 (PANLAVFRFLFAFLMLLDIPQ). The Lumenal segment spans residues 82–113 (ERGLSSLDRKYLDGLDVCRFPLLDALRPLPLD). Residues Cys99 and Cys450 are joined by a disulfide bond. Residues 114-134 (WMYLVYTIMFLGALGMMLGLC) traverse the membrane as a helical segment. The Cytoplasmic portion of the chain corresponds to 135-136 (YR). The chain crosses the membrane as a helical span at residues 137 to 157 (LSCVLFLLPYWYVFLLDKTSW). Residues 158 to 292 (NNHSYLYGLL…VSYFHCMNSQ (135 aa)) are Lumenal-facing. A helical transmembrane segment spans residues 293–313 (LFSIGMFPYVMLASSPLFCSA). The Cytoplasmic segment spans residues 314 to 361 (EWPRKLVARCPKRLQELLPTKAAPRPSASCVYKRSRGKAGPKPGLRHQ). Residues 362 to 382 (LGAIFTLLYLLEQLFLPYSHF) form a helical membrane-spanning segment. Topologically, residues 383-757 (LTQGYNNWTN…PDSEHVHSEF (375 aa)) are lumenal. Residues 729-757 (EPVDESSASNTDSSNHPSEPDSEHVHSEF) are disordered. A compositionally biased stretch (polar residues) spans 734–745 (SSASNTDSSNHP). The span at 746–757 (SEPDSEHVHSEF) shows a compositional bias: basic and acidic residues.

Belongs to the vitamin K-dependent gamma-carboxylase family. As to quaternary structure, monomer. May interact with CALU.

It is found in the endoplasmic reticulum membrane. The catalysed reaction is 4-carboxy-L-glutamyl-[protein] + 2,3-epoxyphylloquinone + H2O + H(+) = phylloquinol + L-glutamyl-[protein] + CO2 + O2. In terms of biological role, mediates the vitamin K-dependent carboxylation of glutamate residues to calcium-binding gamma-carboxyglutamate (Gla) residues with the concomitant conversion of the reduced hydroquinone form of vitamin K to vitamin K epoxide. Catalyzes gamma-carboxylation of various proteins, such as blood coagulation factors (F2, F7, F9 and F10), osteocalcin (bglap and bglap2) or matrix Gla protein (MGP). In Mus musculus (Mouse), this protein is Vitamin K-dependent gamma-carboxylase (Ggcx).